A 111-amino-acid polypeptide reads, in one-letter code: Cyclin-dependent protein kinase inhibitor SMR2 (111 aa).

Positions 1–66 (MSKLLETLEE…PPPRKRPREI (66 aa)) are disordered. Residues 10–35 (EEKTVEQKPRSQEEEDHQDSSKKEEL) show a composition bias toward basic and acidic residues.

Interacts with CYCD2-1. Interacts with CDKB1-1. As to expression, expressed at low levels in roots and stems. Expressed in the root vascular tissue.

The protein resides in the nucleus. Its function is as follows. Cyclin-dependent protein kinase (CDK) inhibitor that restricts cell proliferation and cooperates with SIM and SMR1 to promote endoreplication during leaf development. This chain is Cyclin-dependent protein kinase inhibitor SMR2, found in Arabidopsis thaliana (Mouse-ear cress).